The chain runs to 300 residues: Protein Bel-1 (300 aa).

The disordered stretch occupies residues 1–50 (MDSYEKEESVASTSGIQDLQTLSELVGPENAGEGELTIAEEPEENPRRPR). Positions 10 to 23 (VASTSGIQDLQTLS) are enriched in polar residues. Residues 89 to 200 (SKSLCKRLIL…SEGPKPRPRH (112 aa)) mediate DNA binding. Residues 209-244 (FEKHHKPRQKRPRRRSIDNESCASSSDTMANEPGSL) are disordered. The span at 211–222 (KHHKPRQKRPRR) shows a compositional bias: basic residues. A Nuclear localization signal motif is present at residues 214–223 (KPRQKRPRRR). A transactivation domain region spans residues 224–300 (SIDNESCASS…PSGSGEHSVL (77 aa)). The span at 227–237 (NESCASSSDTM) shows a compositional bias: polar residues.

In terms of assembly, homodimer or homomultimer. Forms complexes with the host nuclear factors NFIA, NFIB, NFIC or NFIX.

The protein resides in the host nucleus. Transcriptional transactivator that activates the viral internal promoter (IP), thereby enhancing its own expression. This transactivation is repressed by nuclear factor I. Also transactivates the long terminal repeat (LTR) promoter, thereby inducing structural gene expression, initiating the late phase of infection. It is therefore a key regulator of viral gene expression. It directly binds to and activates DNA target sites of viral promoters and those of distinct cellular genes. Required for viral replication. The protein is Protein Bel-1 (bel1) of Human spumaretrovirus (SFVcpz(hu)).